We begin with the raw amino-acid sequence, 463 residues long: Trigger factor (463 aa).

Residues Gly162 to Pro243 form the PPIase FKBP-type domain. Residues Ser427–Val444 are compositionally biased toward polar residues. Residues Ser427–Lys463 are disordered.

Belongs to the FKBP-type PPIase family. Tig subfamily.

It localises to the cytoplasm. It catalyses the reaction [protein]-peptidylproline (omega=180) = [protein]-peptidylproline (omega=0). In terms of biological role, involved in protein export. Acts as a chaperone by maintaining the newly synthesized protein in an open conformation. Functions as a peptidyl-prolyl cis-trans isomerase. This is Trigger factor from Thermobifida fusca (strain YX).